Here is a 240-residue protein sequence, read N- to C-terminus: UDP-2,3-diacylglucosamine hydrolase (240 aa).

5 residues coordinate Mn(2+): aspartate 8, histidine 10, aspartate 41, asparagine 79, and histidine 114. 79–80 (NR) lines the substrate pocket. Substrate is bound by residues aspartate 122, serine 160, asparagine 164, lysine 167, and histidine 195. Histidine 195 and histidine 197 together coordinate Mn(2+).

Belongs to the LpxH family. Mn(2+) serves as cofactor.

It is found in the cell inner membrane. The catalysed reaction is UDP-2-N,3-O-bis[(3R)-3-hydroxytetradecanoyl]-alpha-D-glucosamine + H2O = 2-N,3-O-bis[(3R)-3-hydroxytetradecanoyl]-alpha-D-glucosaminyl 1-phosphate + UMP + 2 H(+). It functions in the pathway glycolipid biosynthesis; lipid IV(A) biosynthesis; lipid IV(A) from (3R)-3-hydroxytetradecanoyl-[acyl-carrier-protein] and UDP-N-acetyl-alpha-D-glucosamine: step 4/6. Its function is as follows. Hydrolyzes the pyrophosphate bond of UDP-2,3-diacylglucosamine to yield 2,3-diacylglucosamine 1-phosphate (lipid X) and UMP by catalyzing the attack of water at the alpha-P atom. Involved in the biosynthesis of lipid A, a phosphorylated glycolipid that anchors the lipopolysaccharide to the outer membrane of the cell. This Salmonella agona (strain SL483) protein is UDP-2,3-diacylglucosamine hydrolase.